The sequence spans 39 residues: TTINVKCTSPKQCLPPCKEIYGRHAGAKCINGKCHCSKI.

3 cysteine pairs are disulfide-bonded: Cys-7–Cys-29, Cys-13–Cys-34, and Cys-17–Cys-36. Isoleucine amide is present on Ile-39.

The protein belongs to the short scorpion toxin superfamily. Potassium channel inhibitor family. Alpha-KTx 02 subfamily. In terms of tissue distribution, expressed by the venom gland.

It is found in the secreted. Its function is as follows. Weakly blocks Kv1.3/KCNA3 voltage-gated potassium channels. The polypeptide is Potassium channel toxin alpha-KTx 2.18 (Centruroides limpidus (Mexican scorpion)).